A 226-amino-acid chain; its full sequence is Enolase-phosphatase E1 (226 aa).

The protein belongs to the HAD-like hydrolase superfamily. MasA/MtnC family. As to quaternary structure, monomer. Requires Mg(2+) as cofactor.

It catalyses the reaction 5-methylsulfanyl-2,3-dioxopentyl phosphate + H2O = 1,2-dihydroxy-5-(methylsulfanyl)pent-1-en-3-one + phosphate. It participates in amino-acid biosynthesis; L-methionine biosynthesis via salvage pathway; L-methionine from S-methyl-5-thio-alpha-D-ribose 1-phosphate: step 3/6. The protein operates within amino-acid biosynthesis; L-methionine biosynthesis via salvage pathway; L-methionine from S-methyl-5-thio-alpha-D-ribose 1-phosphate: step 4/6. Functionally, bifunctional enzyme that catalyzes the enolization of 2,3-diketo-5-methylthiopentyl-1-phosphate (DK-MTP-1-P) into the intermediate 2-hydroxy-3-keto-5-methylthiopentenyl-1-phosphate (HK-MTPenyl-1-P), which is then dephosphorylated to form the acireductone 1,2-dihydroxy-3-keto-5-methylthiopentene (DHK-MTPene). This Shewanella sp. (strain W3-18-1) protein is Enolase-phosphatase E1.